Reading from the N-terminus, the 234-residue chain is Staphylococcal superantigen-like 5 (234 aa).

A signal peptide spans 1–30 (MKMTAIAKASLALGILATGTITSLHQTVNA).

The protein belongs to the staphylococcal/streptococcal toxin family. In terms of assembly, interacts with host SELPLG; this interaction prevents SELPLG-mediated neutrophil rolling. Interacts with host MMP9 (via sialic acid-containing O-glycans); this interaction inhibits MMP9 activity. Interacts with host GP1BA and GP6; these interactions play an important role in platelet binding and activation.

In terms of biological role, secreted protein that plays a role in the inhibition of host innate immune system. Modulates the interaction between host SELPLG and P-selectin thereby preventing initial rolling of neutrophils toward the site of infection. Interferes with leukocyte trafficking by inhibiting host metalloproteinase-9/MMP9 activity. Also associates with two different platelet surface receptors GP1A and GP6 leading to platelet activation and aggregation. The sequence is that of Staphylococcal superantigen-like 5 from Staphylococcus aureus (strain NCTC 8325 / PS 47).